Here is a 206-residue protein sequence, read N- to C-terminus: Holliday junction branch migration complex subunit RuvA (206 aa).

Residues 1-64 are domain I; it reads MIAKLTGLLD…EDNIQLFGFA (64 aa). Residues 65–143 are domain II; it reads DTEERDWFRL…SFGAPAPAAA (79 aa). The flexible linker stretch occupies residues 144–154; that stretch reads TAGKGGAAPAG. The interval 154-206 is domain III; it reads GPAGAVADAVSALVNLGYRRVEAFTAVNAVAQRLGPEAGVSDLIRAGLKELSP.

Belongs to the RuvA family. In terms of assembly, homotetramer. Forms an RuvA(8)-RuvB(12)-Holliday junction (HJ) complex. HJ DNA is sandwiched between 2 RuvA tetramers; dsDNA enters through RuvA and exits via RuvB. An RuvB hexamer assembles on each DNA strand where it exits the tetramer. Each RuvB hexamer is contacted by two RuvA subunits (via domain III) on 2 adjacent RuvB subunits; this complex drives branch migration. In the full resolvosome a probable DNA-RuvA(4)-RuvB(12)-RuvC(2) complex forms which resolves the HJ.

The protein resides in the cytoplasm. Functionally, the RuvA-RuvB-RuvC complex processes Holliday junction (HJ) DNA during genetic recombination and DNA repair, while the RuvA-RuvB complex plays an important role in the rescue of blocked DNA replication forks via replication fork reversal (RFR). RuvA specifically binds to HJ cruciform DNA, conferring on it an open structure. The RuvB hexamer acts as an ATP-dependent pump, pulling dsDNA into and through the RuvAB complex. HJ branch migration allows RuvC to scan DNA until it finds its consensus sequence, where it cleaves and resolves the cruciform DNA. This chain is Holliday junction branch migration complex subunit RuvA, found in Rhodospirillum centenum (strain ATCC 51521 / SW).